The primary structure comprises 650 residues: Fructose-1,6-bisphosphatase class 3 (650 aa).

It belongs to the FBPase class 3 family. Mn(2+) serves as cofactor.

The enzyme catalyses beta-D-fructose 1,6-bisphosphate + H2O = beta-D-fructose 6-phosphate + phosphate. Its pathway is carbohydrate biosynthesis; gluconeogenesis. The sequence is that of Fructose-1,6-bisphosphatase class 3 from Staphylococcus saprophyticus subsp. saprophyticus (strain ATCC 15305 / DSM 20229 / NCIMB 8711 / NCTC 7292 / S-41).